The following is a 434-amino-acid chain: Tol-Pal system protein TolB (434 aa).

Positions Met-1 to Ala-28 are cleaved as a signal peptide.

The protein belongs to the TolB family. The Tol-Pal system is composed of five core proteins: the inner membrane proteins TolA, TolQ and TolR, the periplasmic protein TolB and the outer membrane protein Pal. They form a network linking the inner and outer membranes and the peptidoglycan layer.

The protein localises to the periplasm. Functionally, part of the Tol-Pal system, which plays a role in outer membrane invagination during cell division and is important for maintaining outer membrane integrity. This is Tol-Pal system protein TolB from Nitrosococcus oceani (strain ATCC 19707 / BCRC 17464 / JCM 30415 / NCIMB 11848 / C-107).